We begin with the raw amino-acid sequence, 198 residues long: Recombination protein RecR (198 aa).

The C4-type zinc finger occupies 57–72 (CEKCNTFTEAQICEVC). The Toprim domain maps to 80-175 (TLLCVVETPA…AVTRLARGVP (96 aa)).

The protein belongs to the RecR family.

Its function is as follows. May play a role in DNA repair. It seems to be involved in an RecBC-independent recombinational process of DNA repair. It may act with RecF and RecO. This chain is Recombination protein RecR, found in Burkholderia cenocepacia (strain HI2424).